The primary structure comprises 172 residues: uncharacterized protein (172 aa).

The first 29 residues, 1–29 (MKKKQVMLALTAAAGLGLTALHSAPAAKA), serve as a signal peptide directing secretion. SH3b domains follow at residues 42–105 (SDTY…MKTA) and 112–172 (KQTA…LQMR).

This is an uncharacterized protein from Bacillus subtilis (strain 168).